The sequence spans 301 residues: Glutathione transport system permease protein GsiD (301 aa).

6 helical membrane-spanning segments follow: residues 37–57, 103–123, 141–161, 162–182, 220–240, and 264–284; these read VAVA…WAQY, LAAG…LGLL, VLFA…MGSG, MANV…RLVR, IVVF…SLSF, and VIAP…VLAF. An ABC transmembrane type-1 domain is found at 99-288; it reads TRISLAAGIF…LTVLAFNLLG (190 aa).

Belongs to the binding-protein-dependent transport system permease family. The complex is composed of two ATP-binding proteins (GsiA), two transmembrane proteins (GsiC and GsiD) and a solute-binding protein (GsiB).

It localises to the cell inner membrane. Its function is as follows. Part of the ABC transporter complex GsiABCD involved in glutathione import. Probably responsible for the translocation of the substrate across the membrane. The sequence is that of Glutathione transport system permease protein GsiD from Pectobacterium atrosepticum (strain SCRI 1043 / ATCC BAA-672) (Erwinia carotovora subsp. atroseptica).